We begin with the raw amino-acid sequence, 76 residues long: Sec-independent protein translocase protein TatA (76 aa).

The helical transmembrane segment at M1–G21 threads the bilayer. Residues N47–S76 form a disordered region. The span at I66–S76 shows a compositional bias: basic and acidic residues.

This sequence belongs to the TatA/E family. The Tat system comprises two distinct complexes: a TatABC complex, containing multiple copies of TatA, TatB and TatC subunits, and a separate TatA complex, containing only TatA subunits. Substrates initially bind to the TatABC complex, which probably triggers association of the separate TatA complex to form the active translocon.

It localises to the cell inner membrane. Its function is as follows. Part of the twin-arginine translocation (Tat) system that transports large folded proteins containing a characteristic twin-arginine motif in their signal peptide across membranes. TatA could form the protein-conducting channel of the Tat system. The chain is Sec-independent protein translocase protein TatA from Dechloromonas aromatica (strain RCB).